A 183-amino-acid chain; its full sequence is Adenine phosphoribosyltransferase (183 aa).

The protein belongs to the purine/pyrimidine phosphoribosyltransferase family. Homodimer.

It is found in the cytoplasm. It carries out the reaction AMP + diphosphate = 5-phospho-alpha-D-ribose 1-diphosphate + adenine. Its pathway is purine metabolism; AMP biosynthesis via salvage pathway; AMP from adenine: step 1/1. In terms of biological role, catalyzes a salvage reaction resulting in the formation of AMP, that is energically less costly than de novo synthesis. The sequence is that of Adenine phosphoribosyltransferase from Shigella flexneri serotype 5b (strain 8401).